Here is a 390-residue protein sequence, read N- to C-terminus: Formate-dependent phosphoribosylglycinamide formyltransferase (390 aa).

Residues 19-20 (EL) and glutamate 79 each bind N(1)-(5-phospho-beta-D-ribosyl)glycinamide. Residues arginine 111, lysine 152, 157-162 (SSGKGQ), 192-195 (EGFV), and glutamate 200 contribute to the ATP site. An ATP-grasp domain is found at 116–305 (RLAAEELGLP…EFAIHARAIL (190 aa)). Mg(2+)-binding residues include glutamate 264 and glutamate 276. N(1)-(5-phospho-beta-D-ribosyl)glycinamide contacts are provided by residues aspartate 283, lysine 353, and 360 to 361 (RR).

The protein belongs to the PurK/PurT family. As to quaternary structure, homodimer.

The catalysed reaction is N(1)-(5-phospho-beta-D-ribosyl)glycinamide + formate + ATP = N(2)-formyl-N(1)-(5-phospho-beta-D-ribosyl)glycinamide + ADP + phosphate + H(+). It participates in purine metabolism; IMP biosynthesis via de novo pathway; N(2)-formyl-N(1)-(5-phospho-D-ribosyl)glycinamide from N(1)-(5-phospho-D-ribosyl)glycinamide (formate route): step 1/1. Involved in the de novo purine biosynthesis. Catalyzes the transfer of formate to 5-phospho-ribosyl-glycinamide (GAR), producing 5-phospho-ribosyl-N-formylglycinamide (FGAR). Formate is provided by PurU via hydrolysis of 10-formyl-tetrahydrofolate. This is Formate-dependent phosphoribosylglycinamide formyltransferase from Marinobacter nauticus (strain ATCC 700491 / DSM 11845 / VT8) (Marinobacter aquaeolei).